A 42-amino-acid chain; its full sequence is Capsid protein G8P (42 aa).

Topologically, residues 1–12 are periplasmic; the sequence is MGDILTGVSGAE. Residues 13–34 form a helical membrane-spanning segment; the sequence is AATAMIAAAAIIALVGFTKWGA. The Cytoplasmic portion of the chain corresponds to 35–42; that stretch reads KKVASFFG.

Belongs to the inovirus capsid protein family. As to quaternary structure, homomultimerizes. There are several thousands of this protein in the phage capsid.

The protein localises to the virion. Its subcellular location is the host membrane. In terms of biological role, self assembles to form a helical capsid wrapping up the viral genomic DNA. The capsid displays a filamentous structure with a length of 760-1950 nm and a width of 6-8 nm. The virion assembly and budding take place at the host inner membrane. The protein is Capsid protein G8P (VIII) of Xanthomonas phage phiLf (Bacteriophage phi-Lf).